The primary structure comprises 479 residues: Pre-glycoprotein polyprotein GP complex (479 aa).

The N-myristoyl glycine; by host moiety is linked to residue Gly2. The Extracellular portion of the chain corresponds to 2–17 (GQLISFFQDIPIFFEE). A helical membrane pass occupies residues 18 to 32 (ALNVALAVVTLLAII). Position 33 (Lys33) is a topological domain, cytoplasmic. Residues 34–53 (GIVNVWKSGILQLFVFLVLA) traverse the membrane as a helical segment. Extracellular-facing segments span residues 54-58 (GRSCS) and 59-418 (FKVG…TLVD). Cys57 lines the Zn(2+) pocket. Intrachain disulfides connect Cys85-Cys221, Cys265-Cys278, and Cys287-Cys296. Residues Asn88, Asn125, Asn174, Asn202, and Asn214 are each glycosylated (N-linked (GlcNAc...) asparagine; by host). 5 N-linked (GlcNAc...) asparagine; by host glycosylation sites follow: Asn314, Asn351, Asn359, Asn376, and Asn381. A disulfide bridge connects residues Cys350 and Cys371. The helical transmembrane segment at 419–439 (LCFWSAIFFTTSLFLHLVGFP) threads the bilayer. Residues 440–479 (THRHIQGDPCPLPHRLDRNGACRCGRFQKLGKQVTWKRKH) are Cytoplasmic-facing. Zn(2+) is bound by residues His441, His443, Cys449, His453, Cys461, Cys463, and His479.

Belongs to the arenaviridae GPC protein family. As to quaternary structure, homotetramer; disulfide-linked. Homotetramer. GP2 homotetramers bind through ionic interactions with GP1 homotetramers to form the GP complex together with the stable signal peptide. The GP-C polyprotein interacts with the host protease MBTPS1/SKI-1 resulting in the polyprotein processing. Specific enzymatic cleavages in vivo yield mature proteins. GP-C polyprotein is cleaved in the endoplasmic reticulum by the host protease MBTPS1. Only cleaved glycoprotein is incorporated into virions. In terms of processing, the SSP remains stably associated with the GP complex following cleavage by signal peptidase and plays crucial roles in the trafficking of GP through the secretory pathway. Post-translationally, myristoylation is necessary for GP2-mediated fusion activity.

The protein localises to the virion membrane. It localises to the host endoplasmic reticulum membrane. The protein resides in the host Golgi apparatus membrane. It is found in the host cell membrane. Its function is as follows. Interacts with the host receptor. Mediates virus attachment to host TFRC. This attachment induces virion internalization predominantly through clathrin-mediated endocytosis. In terms of biological role, class I viral fusion protein that directs fusion of viral and host endosomal membranes, leading to delivery of the nucleocapsid into the cytoplasm. Membrane fusion is mediated by irreversible conformational changes induced upon acidification in the endosome. Stable signal peptide (SSP): cleaved and functions as a signal peptide. In addition, it is also retained as the third component of the GP complex. The SSP is required for efficient glycoprotein expression, post-translational maturation cleavage of GP1 and GP2, glycoprotein transport to the cell surface plasma membrane, formation of infectious virus particles, and acid pH-dependent glycoprotein-mediated cell fusion. The sequence is that of Pre-glycoprotein polyprotein GP complex from Homo sapiens (Human).